A 396-amino-acid polypeptide reads, in one-letter code: Carbamoyl phosphate synthase small chain (396 aa).

Positions 1–204 (MTQHDNDPAW…WDKGFGQQDK (204 aa)) are CPSase. L-glutamine is bound by residues S59, G256, and G258. The Glutamine amidotransferase type-1 domain maps to 208–396 (NVVAIDYGIK…AELMRQKKSA (189 aa)). Catalysis depends on C285, which acts as the Nucleophile. L-glutamine-binding residues include L286, Q289, N327, G329, and F330. Catalysis depends on residues H369 and E371.

It belongs to the CarA family. As to quaternary structure, composed of two chains; the small (or glutamine) chain promotes the hydrolysis of glutamine to ammonia, which is used by the large (or ammonia) chain to synthesize carbamoyl phosphate. Tetramer of heterodimers (alpha,beta)4.

It carries out the reaction hydrogencarbonate + L-glutamine + 2 ATP + H2O = carbamoyl phosphate + L-glutamate + 2 ADP + phosphate + 2 H(+). It catalyses the reaction L-glutamine + H2O = L-glutamate + NH4(+). Its pathway is amino-acid biosynthesis; L-arginine biosynthesis; carbamoyl phosphate from bicarbonate: step 1/1. It functions in the pathway pyrimidine metabolism; UMP biosynthesis via de novo pathway; (S)-dihydroorotate from bicarbonate: step 1/3. Functionally, small subunit of the glutamine-dependent carbamoyl phosphate synthetase (CPSase). CPSase catalyzes the formation of carbamoyl phosphate from the ammonia moiety of glutamine, carbonate, and phosphate donated by ATP, constituting the first step of 2 biosynthetic pathways, one leading to arginine and/or urea and the other to pyrimidine nucleotides. The small subunit (glutamine amidotransferase) binds and cleaves glutamine to supply the large subunit with the substrate ammonia. The sequence is that of Carbamoyl phosphate synthase small chain from Bradyrhizobium diazoefficiens (strain JCM 10833 / BCRC 13528 / IAM 13628 / NBRC 14792 / USDA 110).